Here is a 966-residue protein sequence, read N- to C-terminus: MARNAVDKATSIDAQLRLLAPQKLSDDDKLVEYDALLLDRFLDILQDLHGEDIRETVQECYELAAEYENKLDPKMLDEIGNVLTSLDPGDSIVITKSFSHMLILANLAEEVQIAYRRRIKLKKGDFVDENSATTESDIEETLKRLMHQLKKSPLEVFDALKNQTVDLVLTAHPTQSVRRSLLQKHGRIRNCLTQLYAKDITPDEKQELDEALQREIQAAFRTDEIRRAPPTPQDEMRAGMSYFHETIWKGVPKFLRRVDTALKNIGINERLPYNAPIIQFSSWMGGDRDGNPRVTPEITRDVCLLARMMAANLYNAQIEDLMFELSMWRCSDELRVKVDELHRSSKKDTTKHYIEFWKQVPPSEPYRVILSDVRDKLYNTRERARHLLASGFSEIPEEATFTDVEQFLEPLELCYRSLCACGDRSVADGSLLDFLRQVSTFGLSLVRLDIRQESDRHTDVMDAITEYLGIGSYRKWTEEKRQEWLLSELNGKRPLFGPDLPKSDEIADVLDTFHVLAELPSDSFGAYVISMATAPSDVLAVELLQRECHVKKPLRVVPLFEKLADLEAAPAALARLFSVEWYRNRINGKQEVMIGYSDSGKDAGRFSAAWQLYKAQEELINVAKLYGVKLTMFHGRGGTVGRGGGPTHLAILSQPPETIHGSLRVTVQGEVIEQSFGEEHLCFRTLQRFTAATLEHGMHPPISPKPEWRALMDEMAIVATKEYRSIVFEEPRFVEYFRLATPEMEYGRMNIGSRPSKRKPSAGIESLRAIPWIFAWTQTRFHLPVWLGFGAAFKHVLDKDIRNLQTLQEMYNQWPFFRVTIDLVEMVFAKGDPGIAALYDKLLVSEDLWSFGKRLRANYEETKQLLLQVAGHKDLLEGDPYLKQRLRIRDSYITALNVCQAYMLKRIRDPGFQVNPGPHLSKDIMDMGKPASELVKLNTTSEYAPGLEDTLILTMKGIAAGMQNTG.

Ser-11 is subject to Phosphoserine. Active-site residues include His-172 and Lys-601.

Belongs to the PEPCase type 1 family. Homotetramer. Mg(2+) serves as cofactor.

The protein resides in the cytoplasm. It carries out the reaction oxaloacetate + phosphate = phosphoenolpyruvate + hydrogencarbonate. Its activity is regulated as follows. By light-reversible phosphorylation. In terms of biological role, through the carboxylation of phosphoenolpyruvate (PEP) it forms oxaloacetate, a four-carbon dicarboxylic acid source for the tricarboxylic acid cycle. The sequence is that of Phosphoenolpyruvate carboxylase, housekeeping isozyme from Saccharum hybrid (Sugarcane).